The sequence spans 294 residues: MTTLTASPNRIAQYWALTKPRVTQLAVFCAVIGMFLATPELPSWKIVVAATIGIWLLAGAAFAINCLVEREIDSRMARTARRPMARGEITVPQTLVFSGLIGGAGMWVLYNFVNPLTMWLTFATFVGYAVIYTIILKPATPQNIVIGGLSGAMPPALGWAAVANDLPMQAWILVLIIFIWTPPHFWALALYRRDEYAKSGLPMLPVTHGTEFTQFHIWLYTIALVATTMLPFAVGMSGLIYLVSVAILDIIFVWYAWQVYRHYTDMIARKMFAYSIIYLSLLFAALLVDHYLRF.

9 consecutive transmembrane segments (helical) span residues 22-42 (VTQLAVFCAVIGMFLATPELP), 46-66 (IVVAATIGIWLLAGAAFAINC), 89-109 (ITVPQTLVFSGLIGGAGMWVL), 116-136 (LTMWLTFATFVGYAVIYTIIL), 143-163 (NIVIGGLSGAMPPALGWAAVA), 170-190 (AWILVLIIFIWTPPHFWALAL), 212-232 (FTQFHIWLYTIALVATTMLPF), 234-254 (VGMSGLIYLVSVAILDIIFVW), and 272-292 (FAYSIIYLSLLFAALLVDHYL).

Belongs to the UbiA prenyltransferase family. Protoheme IX farnesyltransferase subfamily.

The protein localises to the cell inner membrane. It carries out the reaction heme b + (2E,6E)-farnesyl diphosphate + H2O = Fe(II)-heme o + diphosphate. Its pathway is porphyrin-containing compound metabolism; heme O biosynthesis; heme O from protoheme: step 1/1. Converts heme B (protoheme IX) to heme O by substitution of the vinyl group on carbon 2 of heme B porphyrin ring with a hydroxyethyl farnesyl side group. This Janthinobacterium sp. (strain Marseille) (Minibacterium massiliensis) protein is Protoheme IX farnesyltransferase.